Here is a 179-residue protein sequence, read N- to C-terminus: Inner membrane-spanning protein YciB (179 aa).

The next 5 helical transmembrane spans lie at 22–42 (IYAATSALIVATAIVLIYSWV), 50–70 (MALITFVLVAVFGGLTIFFHN), 76–96 (WKVTVIYGLFAGALLISQWVM), 121–141 (LAWAVFFILCGLANIYIAFWL), and 149–169 (FKVFGLTALTLIFTLLSGVYI).

Belongs to the YciB family.

Its subcellular location is the cell inner membrane. In terms of biological role, plays a role in cell envelope biogenesis, maintenance of cell envelope integrity and membrane homeostasis. The polypeptide is Inner membrane-spanning protein YciB (Citrobacter koseri (strain ATCC BAA-895 / CDC 4225-83 / SGSC4696)).